The primary structure comprises 464 residues: Argininosuccinate lyase (464 aa).

It belongs to the lyase 1 family. Argininosuccinate lyase subfamily.

The protein resides in the cytoplasm. The enzyme catalyses 2-(N(omega)-L-arginino)succinate = fumarate + L-arginine. It functions in the pathway amino-acid biosynthesis; L-arginine biosynthesis; L-arginine from L-ornithine and carbamoyl phosphate: step 3/3. In Sulfurovum sp. (strain NBC37-1), this protein is Argininosuccinate lyase.